A 150-amino-acid chain; its full sequence is Transmembrane protein 35B (150 aa).

The first 21 residues, 1 to 21 (MSFRVGVLRVLLGVFFALTGA), serve as a signal peptide directing secretion. 3 consecutive transmembrane segments (helical) span residues 62–82 (TAVG…PPVL), 84–104 (EISN…LVVL), and 111–131 (YVPA…HFLA).

Belongs to the DoxX family.

Its subcellular location is the membrane. This chain is Transmembrane protein 35B, found in Mus musculus (Mouse).